The primary structure comprises 550 residues: Glucose-6-phosphate isomerase (550 aa).

The active-site Proton donor is the E356. Active-site residues include H387 and K515.

This sequence belongs to the GPI family.

It localises to the cytoplasm. It catalyses the reaction alpha-D-glucose 6-phosphate = beta-D-fructose 6-phosphate. It participates in carbohydrate biosynthesis; gluconeogenesis. Its pathway is carbohydrate degradation; glycolysis; D-glyceraldehyde 3-phosphate and glycerone phosphate from D-glucose: step 2/4. Catalyzes the reversible isomerization of glucose-6-phosphate to fructose-6-phosphate. The chain is Glucose-6-phosphate isomerase from Vibrio campbellii (strain ATCC BAA-1116).